Reading from the N-terminus, the 238-residue chain is MESTSNPTVSFLGIDFDLTILAMSLLTITIIFILVFWASRKMTIKPKGKQNVLEYVYELVNNTISQNLGHYTKNYSLLMFILFSFVFIANNLGLMTSLKTHEHNFWTSPTANFGVDITLSLLVAFICHIEGIRKKGIGGYLKGFLSPTPAMLPMNLLEEVTNVASLALRLFGNIFSGEVVTGLLLQLAVLSPFTGPLAFALNIVWTAFSMFIGFIQAYVFIILSSSYIGHKVHGDEEE.

5 helical membrane-spanning segments follow: residues 18-38 (LTILAMSLLTITIIFILVFWA), 75-95 (YSLLMFILFSFVFIANNLGLM), 112-132 (NFGVDITLSLLVAFICHIEGI), 179-199 (VVTGLLLQLAVLSPFTGPLAF), and 203-223 (IVWTAFSMFIGFIQAYVFIIL).

This sequence belongs to the ATPase A chain family. F-type ATPases have 2 components, CF(1) - the catalytic core - and CF(0) - the membrane proton channel. CF(1) has five subunits: alpha(3), beta(3), gamma(1), delta(1), epsilon(1). CF(0) has three main subunits: a(1), b(2) and c(9-12). The alpha and beta chains form an alternating ring which encloses part of the gamma chain. CF(1) is attached to CF(0) by a central stalk formed by the gamma and epsilon chains, while a peripheral stalk is formed by the delta and b chains.

Its subcellular location is the cell membrane. Functionally, key component of the proton channel; it plays a direct role in the translocation of protons across the membrane. This Streptococcus agalactiae serotype Ia (strain ATCC 27591 / A909 / CDC SS700) protein is ATP synthase subunit a.